A 117-amino-acid chain; its full sequence is Hydrogenase maturation factor HypA (117 aa).

A Ni(2+)-binding site is contributed by His2. Zn(2+) contacts are provided by Cys73, Cys76, Cys90, and Cys93.

The protein belongs to the HypA/HybF family.

Its function is as follows. Involved in the maturation of [NiFe] hydrogenases. Required for nickel insertion into the metal center of the hydrogenase. This Pectobacterium atrosepticum (strain SCRI 1043 / ATCC BAA-672) (Erwinia carotovora subsp. atroseptica) protein is Hydrogenase maturation factor HypA.